Consider the following 425-residue polypeptide: MTDPRRRTGRHFLTPENLSSTLQITNLPPEWNQDIITSVVAGSGPVIDIKAKNDPRTGKLTGVLFDYLTSKDCKRAWEILNRIENFPVKIEQIIPPNYKDHLRETANKNSQKQVLQLNRDSYPFEAGLELPFEMVTEVPIPRRPPPPQAANNTNSVSNNTNIQFPDILSKASKHLPSFQDGSIIAPDKISQNLSKIPPLQLIEIISNLKILSNQENIQKSQLESFLDTNSDITISVTQALLEMGFIDYSVVTKVLKSQVGEAPSLLSSNNTSNSNTPVSVIRNNTPLHVPSNEVSNNPNNMPLNVAMPMPMSTPPFIPLPLQQQPFGFAPPGPFMPPAQGPSMGQPVLANQLGQVQQQNISSTEGPSNANKANDSGTINMAKLQLLPENQQDMIKQVLTLTPAQIQSLPSDQQLMVENFRKEYII.

A Phosphoserine modification is found at Ser272.

In terms of assembly, component of the cleavage and polyadenylation factor (CPF) complex, which is composed of PTI1, SYC1, SSU72, GLC7, MPE1, REF2, PFS2, PTA1, YSH1/BRR5, SWD2, CFT2/YDH1, YTH1, CFT1/YHH1, FIP1 and PAP1. Component of the APT complex, which is a subcomplex of CPF, and is composed of PTI1, SYC1, SSU72, GLC7, REF2, PTA1 and SWD2.

Its subcellular location is the nucleus. In terms of biological role, component of the cleavage and polyadenylation factor (CPF) complex, which plays a key role in polyadenylation-dependent pre-mRNA 3'-end formation and cooperates with cleavage factors including the CFIA complex and NAB4/CFIB. Component of the APT complex, which may be involved in polyadenylation-independent transcript 3'-end formation. PTI1 is required for 3'-end formation of snoRNAs. This chain is Protein PTI1 (PTI1), found in Saccharomyces cerevisiae (strain ATCC 204508 / S288c) (Baker's yeast).